Here is a 515-residue protein sequence, read N- to C-terminus: Maturase K (515 aa).

Belongs to the intron maturase 2 family. MatK subfamily.

It localises to the plastid. The protein resides in the chloroplast. Functionally, usually encoded in the trnK tRNA gene intron. Probably assists in splicing its own and other chloroplast group II introns. This is Maturase K from Pinus luchuensis (Ryukyu island pine).